The sequence spans 326 residues: N-acetyl-gamma-glutamyl-phosphate reductase (326 aa).

Cys155 is an active-site residue.

This sequence belongs to the NAGSA dehydrogenase family. Type 1 subfamily.

Its subcellular location is the cytoplasm. The enzyme catalyses N-acetyl-L-glutamate 5-semialdehyde + phosphate + NADP(+) = N-acetyl-L-glutamyl 5-phosphate + NADPH + H(+). The protein operates within amino-acid biosynthesis; L-arginine biosynthesis; N(2)-acetyl-L-ornithine from L-glutamate: step 3/4. Catalyzes the NADPH-dependent reduction of N-acetyl-5-glutamyl phosphate to yield N-acetyl-L-glutamate 5-semialdehyde. The protein is N-acetyl-gamma-glutamyl-phosphate reductase of Shewanella oneidensis (strain ATCC 700550 / JCM 31522 / CIP 106686 / LMG 19005 / NCIMB 14063 / MR-1).